We begin with the raw amino-acid sequence, 73 residues long: MKTLCFLLLTSGLLYLMVKGVGSHPGTFHVRIKCMPKMTAVFGDNCSFYSSMGDLCNNTKSVCCMVPVRMDNI.

Residues 1–23 (MKTLCFLLLTSGLLYLMVKGVGS) form the signal peptide. Intrachain disulfides connect C34–C63 and C46–C64.

This sequence belongs to the beta-defensin family. As to expression, highly expressed in prostate. Not expressed in uterus, epididymis, ovary, testis, spleen, submaxillary gland, thymus, thyroid, pancreas, smooth muscle, skeletal muscle, heart, kidney, lung, liver, eye and brain.

It is found in the secreted. In terms of biological role, has bactericidal activity. The chain is Beta-defensin 50 (Defb50) from Mus musculus (Mouse).